The primary structure comprises 219 residues: uncharacterized protein (219 aa).

A helical membrane pass occupies residues 28–50; that stretch reads IVSSLIAGGYALFVSAFTSYVYT. Residues 155-218 are a coiled coil; that stretch reads EILRESLSEI…EEIEKELEFF (64 aa).

The protein localises to the membrane. This is an uncharacterized protein from Aquifex aeolicus (strain VF5).